We begin with the raw amino-acid sequence, 354 residues long: UDP-3-O-acylglucosamine N-acyltransferase (354 aa).

The active-site Proton acceptor is H258.

The protein belongs to the transferase hexapeptide repeat family. LpxD subfamily. As to quaternary structure, homotrimer.

It catalyses the reaction a UDP-3-O-[(3R)-3-hydroxyacyl]-alpha-D-glucosamine + a (3R)-hydroxyacyl-[ACP] = a UDP-2-N,3-O-bis[(3R)-3-hydroxyacyl]-alpha-D-glucosamine + holo-[ACP] + H(+). It functions in the pathway bacterial outer membrane biogenesis; LPS lipid A biosynthesis. Functionally, catalyzes the N-acylation of UDP-3-O-acylglucosamine using 3-hydroxyacyl-ACP as the acyl donor. Is involved in the biosynthesis of lipid A, a phosphorylated glycolipid that anchors the lipopolysaccharide to the outer membrane of the cell. The chain is UDP-3-O-acylglucosamine N-acyltransferase from Sinorhizobium medicae (strain WSM419) (Ensifer medicae).